Consider the following 106-residue polypeptide: Tripartite terminase subunit 2 (106 aa).

Belongs to the herpesviridae TRM2 protein family. In terms of assembly, associates with TRM1 and TRM3 to form the tripartite terminase complex.

The protein resides in the host nucleus. Its function is as follows. Component of the molecular motor that translocates viral genomic DNA in empty capsid during DNA packaging. Forms a tripartite terminase complex together with TRM1 and TRM3 in the host cytoplasm. Once the complex reaches the host nucleus, it interacts with the capsid portal vertex. This portal forms a ring in which genomic DNA is translocated into the capsid. This chain is Tripartite terminase subunit 2, found in Human herpesvirus 6A (strain Uganda-1102) (HHV-6 variant A).